The primary structure comprises 378 residues: Flap endonuclease 1 (378 aa).

Residues 1-102 (MGIHGLAKLI…GELAKRSERR (102 aa)) are N-domain. At Arg-19 the chain carries Symmetric dimethylarginine; by PRMT5. A Mg(2+)-binding site is contributed by Asp-34. DNA is bound by residues Arg-47 and Arg-69. Lys-78 carries the post-translational modification N6-acetyllysine. Residue Asp-84 participates in Mg(2+) binding. A symmetric dimethylarginine; by PRMT5 mark is found at Arg-98 and Arg-102. The I-domain stretch occupies residues 120-251 (EVEKFTKRLV…KRAVDLIQKH (132 aa)). Glu-156, Glu-158, Asp-177, and Asp-179 together coordinate Mg(2+). Glu-156 contributes to the DNA binding site. Ser-185 is subject to Phosphoserine; by CDK2. The residue at position 190 (Arg-190) is a Symmetric dimethylarginine; by PRMT5. Ser-195 is subject to Phosphoserine. 2 residues coordinate DNA: Gly-229 and Asp-231. Residue Asp-231 participates in Mg(2+) binding. Phosphoserine is present on residues Ser-253, Ser-291, and Ser-333. The interval 325-378 (RLSKSRQGSTQGRLDDFFKVTGSLSSAKRKEPEPKGPAKKKAKTGGAGKFRRGK) is disordered. Thr-334 carries the post-translational modification Phosphothreonine. Residues 334–342 (TQGRLDDFF) are interaction with PCNA. Lys-352, Lys-373, and Lys-378 each carry N6-acetyllysine. Residues 361 to 378 (PAKKKAKTGGAGKFRRGK) are compositionally biased toward basic residues.

Belongs to the XPG/RAD2 endonuclease family. FEN1 subfamily. In terms of assembly, interacts with PCNA. Three molecules of FEN1 bind to one PCNA trimer with each molecule binding to one PCNA monomer. PCNA stimulates the nuclease activity without altering cleavage specificity. The C-terminal domain binds EP300; can bind simultaneously to both PCNA and EP300. Interacts with DDX11; this interaction is direct and increases flap endonuclease activity of FEN1. Interacts with WDR4; regulating its endonuclease activity. Interacts with POLB. The cofactor is Mg(2+). Post-translationally, acetylated by EP300. Acetylation inhibits both endonuclease and exonuclease activity. Acetylation also reduces DNA-binding activity but does not affect interaction with PCNA or EP300. Phosphorylation upon DNA damage induces relocalization to the nuclear plasma. Phosphorylation at Ser-185 by CDK2 occurs during late S-phase and results in dissociation from PCNA. In terms of processing, methylation at Arg-190 by PRMT5 impedes Ser-185 phosphorylation and increases interaction with PCNA.

It is found in the nucleus. It localises to the nucleolus. Its subcellular location is the nucleoplasm. The protein resides in the mitochondrion. Functionally, structure-specific nuclease with 5'-flap endonuclease and 5'-3' exonuclease activities involved in DNA replication and repair. During DNA replication, cleaves the 5'-overhanging flap structure that is generated by displacement synthesis when DNA polymerase encounters the 5'-end of a downstream Okazaki fragment. It enters the flap from the 5'-end and then tracks to cleave the flap base, leaving a nick for ligation. Also involved in the long patch base excision repair (LP-BER) pathway, by cleaving within the apurinic/apyrimidinic (AP) site-terminated flap. Acts as a genome stabilization factor that prevents flaps from equilibrating into structures that lead to duplications and deletions. Also possesses 5'-3' exonuclease activity on nicked or gapped double-stranded DNA, and exhibits RNase H activity. Also involved in replication and repair of rDNA and in repairing mitochondrial DNA. The protein is Flap endonuclease 1 of Mus musculus (Mouse).